Consider the following 138-residue polypeptide: Small ribosomal subunit protein uS11c (138 aa).

The tract at residues 1–23 is disordered; the sequence is MAKPIQRIGSRRNGPIGSRKNGR.

Belongs to the universal ribosomal protein uS11 family. As to quaternary structure, part of the 30S ribosomal subunit.

The protein localises to the plastid. It localises to the chloroplast. The polypeptide is Small ribosomal subunit protein uS11c (Platanus occidentalis (Sycamore)).